A 241-amino-acid polypeptide reads, in one-letter code: Glucosamine-6-phosphate deaminase (241 aa).

The active-site Proton acceptor; for enolization step is the Asp-67. The For ring-opening step role is filled by Asn-136. His-138 (proton acceptor; for ring-opening step) is an active-site residue. Residue Glu-143 is the For ring-opening step of the active site.

It belongs to the glucosamine/galactosamine-6-phosphate isomerase family. NagB subfamily.

The enzyme catalyses alpha-D-glucosamine 6-phosphate + H2O = beta-D-fructose 6-phosphate + NH4(+). It participates in amino-sugar metabolism; N-acetylneuraminate degradation; D-fructose 6-phosphate from N-acetylneuraminate: step 5/5. Catalyzes the reversible isomerization-deamination of glucosamine 6-phosphate (GlcN6P) to form fructose 6-phosphate (Fru6P) and ammonium ion. The sequence is that of Glucosamine-6-phosphate deaminase from Bacillus pumilus (strain SAFR-032).